A 289-amino-acid chain; its full sequence is Acetyl-coenzyme A carboxylase carboxyl transferase subunit beta 2 (289 aa).

Positions 25 to 289 constitute a CoA carboxyltransferase N-terminal domain; it reads VWTKCPSCDQ…TNTSIRLEVK (265 aa). Residues cysteine 29, cysteine 32, cysteine 48, and cysteine 51 each coordinate Zn(2+). A C4-type zinc finger spans residues 29–51; it reads CPSCDQVLYRIALKENLEVCPKC.

The protein belongs to the AccD/PCCB family. Acetyl-CoA carboxylase is a heterohexamer composed of biotin carboxyl carrier protein (AccB), biotin carboxylase (AccC) and two subunits each of ACCase subunit alpha (AccA) and ACCase subunit beta (AccD). Zn(2+) is required as a cofactor.

Its subcellular location is the cytoplasm. The enzyme catalyses N(6)-carboxybiotinyl-L-lysyl-[protein] + acetyl-CoA = N(6)-biotinyl-L-lysyl-[protein] + malonyl-CoA. Its pathway is lipid metabolism; malonyl-CoA biosynthesis; malonyl-CoA from acetyl-CoA: step 1/1. In terms of biological role, component of the acetyl coenzyme A carboxylase (ACC) complex. Biotin carboxylase (BC) catalyzes the carboxylation of biotin on its carrier protein (BCCP) and then the CO(2) group is transferred by the transcarboxylase to acetyl-CoA to form malonyl-CoA. The chain is Acetyl-coenzyme A carboxylase carboxyl transferase subunit beta 2 from Vibrio parahaemolyticus serotype O3:K6 (strain RIMD 2210633).